Consider the following 505-residue polypeptide: Maturase K (505 aa).

The protein belongs to the intron maturase 2 family. MatK subfamily.

The protein resides in the plastid. It is found in the chloroplast. Its function is as follows. Usually encoded in the trnK tRNA gene intron. Probably assists in splicing its own and other chloroplast group II introns. In Amaranthus greggii (Gregg's amaranth), this protein is Maturase K.